A 419-amino-acid chain; its full sequence is G protein-activated inward rectifier potassium channel 4 (419 aa).

At 1 to 86 (MAGDSRNAMN…LFTTLVDLKW (86 aa)) the chain is on the cytoplasmic side. Ser-5 bears the Phosphoserine mark. Residues 87–111 (RFNLLVFTMVYTITWLFFGFIWWLI) form a helical membrane-spanning segment. Over 112–135 (AYVRGDLDHVGDQEWIPCVENLSG) the chain is Extracellular. The segment at residues 136–147 (FVSAFLFSIETE) is an intramembrane region (helical; Pore-forming). Positions 148–154 (TTIGYGF) form an intramembrane region, pore-forming. The Selectivity filter signature appears at 149–154 (TIGYGF). Residues 155-163 (RVITEKCPE) lie on the Extracellular side of the membrane. Residues 164-185 (GIILLLVQAILGSIVNAFMVGC) traverse the membrane as a helical segment. Over 186 to 419 (MFVKISQPKK…SVSRATRGSM (234 aa)) the chain is Cytoplasmic. Residues 380-390 (LPSPPLLGGCA) show a composition bias toward low complexity. The segment at 380 to 419 (LPSPPLLGGCAEAEKEAEAEHDEEEEPNGLSVSRATRGSM) is disordered. Residues 409-419 (LSVSRATRGSM) are compositionally biased toward polar residues.

Belongs to the inward rectifier-type potassium channel (TC 1.A.2.1) family. KCNJ5 subfamily. As to quaternary structure, associates with KCNJ3/GIRK1 or KCNJ6/GRIK2 to form a G-protein-activated heteromultimer pore-forming unit. The resulting inward current is much larger. As to expression, most abundant in heart tissue where it is found predominantly in atria. Also found in brain, kidney, liver, spleen, lung and thymus.

Its subcellular location is the membrane. The enzyme catalyses K(+)(in) = K(+)(out). Its activity is regulated as follows. Heteromultimer composed of KCNJ3/GIRK1 and KCNJ5/GIRK4 is activated by phosphatidylinositol 4,5 biphosphate (PtdIns(4,5)P2). In terms of biological role, inward rectifier potassium channels are characterized by a greater tendency to allow potassium to flow into the cell rather than out of it. Their voltage dependence is regulated by the concentration of extracellular potassium; as external potassium is raised, the voltage range of the channel opening shifts to more positive voltages. The inward rectification is mainly due to the blockage of outward current by internal magnesium. Can be blocked by external barium. This potassium channel is controlled by G proteins. The chain is G protein-activated inward rectifier potassium channel 4 (Kcnj5) from Rattus norvegicus (Rat).